A 957-amino-acid polypeptide reads, in one-letter code: Isoleucine--tRNA ligase (957 aa).

The 'HIGH' region motif lies at 57–67 (PYANGDIHIGH). E594 contributes to the L-isoleucyl-5'-AMP binding site. Residues 635–639 (KMSKS) carry the 'KMSKS' region motif. K638 serves as a coordination point for ATP. Residues C920, C923, C940, and C943 each contribute to the Zn(2+) site.

It belongs to the class-I aminoacyl-tRNA synthetase family. IleS type 1 subfamily. As to quaternary structure, monomer. Requires Zn(2+) as cofactor.

The protein localises to the cytoplasm. It carries out the reaction tRNA(Ile) + L-isoleucine + ATP = L-isoleucyl-tRNA(Ile) + AMP + diphosphate. In terms of biological role, catalyzes the attachment of isoleucine to tRNA(Ile). As IleRS can inadvertently accommodate and process structurally similar amino acids such as valine, to avoid such errors it has two additional distinct tRNA(Ile)-dependent editing activities. One activity is designated as 'pretransfer' editing and involves the hydrolysis of activated Val-AMP. The other activity is designated 'posttransfer' editing and involves deacylation of mischarged Val-tRNA(Ile). The sequence is that of Isoleucine--tRNA ligase from Laribacter hongkongensis (strain HLHK9).